The following is a 264-amino-acid chain: Putative hydro-lyase Bpet2233 (264 aa).

It belongs to the D-glutamate cyclase family.

The polypeptide is Putative hydro-lyase Bpet2233 (Bordetella petrii (strain ATCC BAA-461 / DSM 12804 / CCUG 43448)).